We begin with the raw amino-acid sequence, 338 residues long: Tetraacyldisaccharide 4'-kinase (338 aa).

53 to 60 (VAGGAGKT) lines the ATP pocket.

Belongs to the LpxK family.

It carries out the reaction a lipid A disaccharide + ATP = a lipid IVA + ADP + H(+). Its pathway is glycolipid biosynthesis; lipid IV(A) biosynthesis; lipid IV(A) from (3R)-3-hydroxytetradecanoyl-[acyl-carrier-protein] and UDP-N-acetyl-alpha-D-glucosamine: step 6/6. Transfers the gamma-phosphate of ATP to the 4'-position of a tetraacyldisaccharide 1-phosphate intermediate (termed DS-1-P) to form tetraacyldisaccharide 1,4'-bis-phosphate (lipid IVA). In Polaromonas sp. (strain JS666 / ATCC BAA-500), this protein is Tetraacyldisaccharide 4'-kinase.